Reading from the N-terminus, the 1334-residue chain is Rho1 guanine nucleotide exchange factor 1 (1334 aa).

4 disordered regions span residues 1–89 (MDYR…ASPV), 135–182 (PQVS…SDSV), 203–245 (LDQN…TSGT), and 381–402 (SLIN…ASSP). The span at 138–149 (SNHAPNNSNSPS) shows a compositional bias: low complexity. Residues 150-164 (LTWHTSSGDDSNQNP) show a composition bias toward polar residues. Low complexity predominate over residues 170–180 (QSQSSTSPVSD). 3 stretches are compositionally biased toward polar residues: residues 213–227 (VRSS…NSRL), 234–245 (HTVGSHSFTSGT), and 381–400 (SLIN…SEAS). Serine 381 carries the phosphoserine modification. The region spanning 621–808 (KRQEVICEVI…RGFLSRLNVE (188 aa)) is the DH domain. The 131-residue stretch at 843–973 (QLIFKGPLKK…WLEHIDNQQT (131 aa)) folds into the PH domain. Positions 995 to 1293 (DNKVNAIGVY…RLLADGRGKL (299 aa)) constitute a CNH domain.

The protein localises to the cytoplasm. In terms of biological role, stimulates the exchange of Rho1 and Rho5 GDP-bound form into GTP-bound form. Controls septum formation, cell wall synthesis and localization of F-actin patches. Coordinates actin deposition with cell wall biosynthesis during bipolar growth. This is Rho1 guanine nucleotide exchange factor 1 (rgf1) from Schizosaccharomyces pombe (strain 972 / ATCC 24843) (Fission yeast).